Here is a 673-residue protein sequence, read N- to C-terminus: UvrABC system protein B (673 aa).

Residues 28-414 (ASILQNKRSQ…EAGGEIVEQL (387 aa)) form the Helicase ATP-binding domain. 41–48 (GITGSGKT) is a binding site for ATP. The short motif at 94–117 (YYDYYQPEAYVPRTDTYIEKDMSI) is the Beta-hairpin element. The region spanning 433–595 (QVDDCLAEIR…ITPRTVKREI (163 aa)) is the Helicase C-terminal domain. The region spanning 633–668 (RLKIKECEKEMKKAAKEFRFEEAADWRDQMRRYQQI) is the UVR domain.

The protein belongs to the UvrB family. Forms a heterotetramer with UvrA during the search for lesions. Interacts with UvrC in an incision complex.

It is found in the cytoplasm. Its function is as follows. The UvrABC repair system catalyzes the recognition and processing of DNA lesions. A damage recognition complex composed of 2 UvrA and 2 UvrB subunits scans DNA for abnormalities. Upon binding of the UvrA(2)B(2) complex to a putative damaged site, the DNA wraps around one UvrB monomer. DNA wrap is dependent on ATP binding by UvrB and probably causes local melting of the DNA helix, facilitating insertion of UvrB beta-hairpin between the DNA strands. Then UvrB probes one DNA strand for the presence of a lesion. If a lesion is found the UvrA subunits dissociate and the UvrB-DNA preincision complex is formed. This complex is subsequently bound by UvrC and the second UvrB is released. If no lesion is found, the DNA wraps around the other UvrB subunit that will check the other stand for damage. This Protochlamydia amoebophila (strain UWE25) protein is UvrABC system protein B.